We begin with the raw amino-acid sequence, 888 residues long: 3-hydroxy-3-methylglutaryl-coenzyme A reductase (888 aa).

At 1-9 (MLSRLFRMH) the chain is on the cytoplasmic side. The helical transmembrane segment at 10-39 (GLFVASHPWEVIVGTVTLTICMMSMNMFTG) threads the bilayer. The Lumenal segment spans residues 40–56 (NNKICGWNYECPKLEED). The chain crosses the membrane as a helical span at residues 57–78 (VLSSDIIILTITRCIAILYIYF). In terms of domain architecture, SSD spans 61–218 (DIIILTITRC…MTFFPACVSL (158 aa)). The short motif at 75-78 (YIYF) is the INSIG-binding motif element. Residues 79-89 (QFQNLRQLGSK) lie on the Cytoplasmic side of the membrane. Residue Lys-89 forms a Glycyl lysine isopeptide (Lys-Gly) (interchain with G-Cter in ubiquitin) linkage. The chain crosses the membrane as a helical span at residues 90-114 (YILGIAGLFTIFSSFVFSTVVIHFL). Topologically, residues 115–123 (DKELTGLNE) are lumenal. The helical transmembrane segment at 124–149 (ALPFFLLLVDLSRASALAKFALSSNS) threads the bilayer. The Cytoplasmic portion of the chain corresponds to 150–159 (QDEVRENIAR). Residues 160–187 (GMAILGPTFTLDALVECLVIGVGTMSGV) traverse the membrane as a helical segment. Over 188–191 (RQLE) the chain is Lumenal. The helical transmembrane segment at 192–220 (IMCCFGCMSVLANYFVFMTFFPACVSLVL) threads the bilayer. The Cytoplasmic portion of the chain corresponds to 221-248 (ELSRESREGRPIWQLSHFARVLEEEENK). Lys-248 is covalently cross-linked (Glycyl lysine isopeptide (Lys-Gly) (interchain with G-Cter in ubiquitin)). A helical transmembrane segment spans residues 249-275 (PNPVTQRVKMIMSLGLVLVHAHSRWIA). Residues 276–314 (DPSPQNSTADNSKVSLGLDENVSKRIEPSVSLWQFYLSK) are Lumenal-facing. N-linked (GlcNAc...) asparagine glycans are attached at residues Asn-281 and Asn-296. A helical transmembrane segment spans residues 315 to 339 (MISMDIEQVITLSLALLLAVKYIFF). Over 340 to 888 (EQAETESTLS…LQGTCTKKAA (549 aa)) the chain is Cytoplasmic. Active-site charge relay system residues include Glu-559, Lys-691, and Asp-767. His-866 (proton donor) is an active-site residue. At Ser-872 the chain carries Phosphoserine; by AMPK.

This sequence belongs to the HMG-CoA reductase family. As to quaternary structure, homotetramer. Homodimer. Interacts (via its SSD) with INSIG1; the interaction, accelerated by sterols, leads to the recruitment of HMGCR to AMFR/gp78 for its ubiquitination by the sterol-mediated ERAD pathway. Interacts with UBIAD1. Post-translationally, undergoes sterol-mediated ubiquitination and ER-associated degradation (ERAD). Accumulation of sterols in the endoplasmic reticulum (ER) membrane, triggers binding of the reductase to the ER membrane protein INSIG1 or INSIG2. The INSIG1 binding leads to the recruitment of the ubiquitin ligase, AMFR/gp78, RNF139 or RNF145, initiating ubiquitination of the reductase. The ubiquitinated reductase is then extracted from the ER membrane and delivered to cytosolic 26S proteosomes by a mechanism probably mediated by the ATPase Valosin-containing protein VCP/p97. The INSIG2-binding leads to the recruitment of the ubiquitin ligase RNF139, initiating ubiquitination of the reductase. Lys-248 is the main site of ubiquitination. Ubiquitination is enhanced by the presence of a geranylgeranylated protein. In terms of processing, N-glycosylated. Deglycosylated by NGLY1 on release from the endoplasmic reticulum (ER) in a sterol-mediated manner. Phosphorylated. Phosphorylation at Ser-872 reduces the catalytic activity.

The protein localises to the endoplasmic reticulum membrane. Its subcellular location is the peroxisome membrane. The enzyme catalyses (R)-mevalonate + 2 NADP(+) + CoA = (3S)-3-hydroxy-3-methylglutaryl-CoA + 2 NADPH + 2 H(+). The protein operates within metabolic intermediate biosynthesis; (R)-mevalonate biosynthesis; (R)-mevalonate from acetyl-CoA: step 3/3. Its activity is regulated as follows. Regulated by a negative feedback mechanism through sterols and non-sterol metabolites derived from mevalonate. Phosphorylation at Ser-872 down-regulates the catalytic activity. In terms of biological role, catalyzes the conversion of (3S)-hydroxy-3-methylglutaryl-CoA (HMG-CoA) to mevalonic acid, the rate-limiting step in the synthesis of cholesterol and other isoprenoids, thus plays a critical role in cellular cholesterol homeostasis. This chain is 3-hydroxy-3-methylglutaryl-coenzyme A reductase (HMGCR), found in Bos taurus (Bovine).